The following is a 284-amino-acid chain: uncharacterized protein (284 aa).

A C3H1-type zinc finger spans residues 37–65 (NEKKLICFSIINGENCIYGPNCTYAHSLS).

This is an uncharacterized protein from Acanthamoeba polyphaga (Amoeba).